Consider the following 258-residue polypeptide: 2S seed storage albumin protein (258 aa).

The first 24 residues, 1-24 (MAKLIPTIALVSVLLFIIANASFA), serve as a signal peptide directing secretion. Positions 25 to 35 (YRTTITTIEID) are excised as a propeptide. 4 disulfides stabilise this stretch: cysteine 49/cysteine 108, cysteine 61/cysteine 97, cysteine 98/cysteine 145, and cysteine 110/cysteine 149. The segment at 64–87 (YLRQSSSRRSPGEEVLRMPGDENQ) is disordered. Position 69 is a phosphoserine (serine 69). The segment covering 73-83 (SPGEEVLRMPG) has biased composition (basic and acidic residues). Positions 77 to 86 (EVLRMPGDEN) are excised as a propeptide. The residue at position 87 (glutamine 87) is a Pyrrolidone carboxylic acid. Propeptides lie at residues 154–156 (RTN) and 191–193 (SDN). Disulfide bonds link cysteine 162–cysteine 212, cysteine 175–cysteine 201, cysteine 202–cysteine 249, and cysteine 214–cysteine 256. Residue glutamine 194 is modified to Pyrrolidone carboxylic acid.

This sequence belongs to the 2S seed storage albumins family. The 2 mature proteins consist of heterodimers of a small and a large chain; disulfide-linked. Post-translationally, the N-terminus of both large chains is blocked. The C-terminus of the allergen Ric c 1 and allergen Ric c 3 small chains are heterogeneous and the length of the chains can vary from 33 to 36 amino acids and from 36 to 40 amino acids respectively.

2S seed storage proteins. The chain is 2S seed storage albumin protein from Ricinus communis (Castor bean).